Consider the following 157-residue polypeptide: ATP synthase subunit b (157 aa).

Residues 1–21 (MHFLDESFWLAISFIIFVYLI) form a helical membrane-spanning segment.

It belongs to the ATPase B chain family. As to quaternary structure, F-type ATPases have 2 components, F(1) - the catalytic core - and F(0) - the membrane proton channel. F(1) has five subunits: alpha(3), beta(3), gamma(1), delta(1), epsilon(1). F(0) has three main subunits: a(1), b(2) and c(10-14). The alpha and beta chains form an alternating ring which encloses part of the gamma chain. F(1) is attached to F(0) by a central stalk formed by the gamma and epsilon chains, while a peripheral stalk is formed by the delta and b chains.

The protein localises to the cell inner membrane. In terms of biological role, f(1)F(0) ATP synthase produces ATP from ADP in the presence of a proton or sodium gradient. F-type ATPases consist of two structural domains, F(1) containing the extramembraneous catalytic core and F(0) containing the membrane proton channel, linked together by a central stalk and a peripheral stalk. During catalysis, ATP synthesis in the catalytic domain of F(1) is coupled via a rotary mechanism of the central stalk subunits to proton translocation. Functionally, component of the F(0) channel, it forms part of the peripheral stalk, linking F(1) to F(0). This chain is ATP synthase subunit b, found in Rickettsia bellii (strain RML369-C).